A 201-amino-acid chain; its full sequence is Ribonuclease HII (201 aa).

The 187-residue stretch at 15 to 201 (QRVAGVDEVG…FRPVRRFLEA (187 aa)) folds into the RNase H type-2 domain. Asp-21, Glu-22, and Asp-113 together coordinate a divalent metal cation.

This sequence belongs to the RNase HII family. Mn(2+) serves as cofactor. The cofactor is Mg(2+).

The protein resides in the cytoplasm. The catalysed reaction is Endonucleolytic cleavage to 5'-phosphomonoester.. Functionally, endonuclease that specifically degrades the RNA of RNA-DNA hybrids. In Nitrosococcus oceani (strain ATCC 19707 / BCRC 17464 / JCM 30415 / NCIMB 11848 / C-107), this protein is Ribonuclease HII.